We begin with the raw amino-acid sequence, 445 residues long: Sporulation-specific glucan 1,3-beta-glucosidase (445 aa).

The first 21 residues, 1 to 21, serve as a signal peptide directing secretion; that stretch reads MVSFRGLTTLTLLFTKLVNCN. The N-linked (GlcNAc...) asparagine glycan is linked to N201. E233 (proton donor) is an active-site residue. The active-site Nucleophile is E335.

It belongs to the glycosyl hydrolase 5 (cellulase A) family.

It is found in the secreted. The catalysed reaction is Successive hydrolysis of beta-D-glucose units from the non-reducing ends of (1-&gt;3)-beta-D-glucans, releasing alpha-glucose.. Its function is as follows. Probably involved in the processes of spore formation and contributes to ascospore thermoresistance by participating in the morphogenesis of ascospore walls. The enzyme may do this by modifying glucan linkages in the developing ascospore wall, thus strengthening it or lending it plasticity. This chain is Sporulation-specific glucan 1,3-beta-glucosidase (SPR1), found in Saccharomyces cerevisiae (strain ATCC 204508 / S288c) (Baker's yeast).